A 987-amino-acid chain; its full sequence is ATP-dependent 6-phosphofructokinase subunit alpha (987 aa).

Positions 1 to 602 (MPSSSDAINR…DYRYFRDISI (602 aa)) are N-terminal catalytic PFK domain 1. Residues Gly237, 300–301 (RC), and 330–333 (GDGS) contribute to the ATP site. Asp331 is a binding site for Mg(2+). Residues 376-378 (SID), Arg413, 420-422 (MGR), Glu477, Arg504, and 510-513 (HVQR) each bind beta-D-fructose 6-phosphate. The Proton acceptor role is filled by Asp378. Residues 603–616 (YDDGSKQLSEDKRL) form an interdomain linker region. Positions 617-987 (NIAIVHVGAA…KSLLKKQERY (371 aa)) are C-terminal regulatory PFK domain 2. Beta-D-fructose 2,6-bisphosphate is bound by residues Arg686, 743–747 (TVSNN), Arg781, 788–790 (QGG), Glu848, Arg874, 880–883 (HVQQ), and Arg958.

The protein belongs to the phosphofructokinase type A (PFKA) family. ATP-dependent PFK group I subfamily. Eukaryotic two domain clade 'E' sub-subfamily. As to quaternary structure, heterooctamer of 4 alpha and 4 beta chains. It depends on Mg(2+) as a cofactor.

The protein resides in the cytoplasm. It carries out the reaction beta-D-fructose 6-phosphate + ATP = beta-D-fructose 1,6-bisphosphate + ADP + H(+). It functions in the pathway carbohydrate degradation; glycolysis; D-glyceraldehyde 3-phosphate and glycerone phosphate from D-glucose: step 3/4. Its activity is regulated as follows. Allosterically activated by ADP, AMP, or fructose 2,6-bisphosphate, and allosterically inhibited by ATP or citrate. Functionally, catalyzes the phosphorylation of D-fructose 6-phosphate to fructose 1,6-bisphosphate by ATP, the first committing step of glycolysis. This Candida albicans (Yeast) protein is ATP-dependent 6-phosphofructokinase subunit alpha (PFK1).